A 228-amino-acid chain; its full sequence is Cytidylate kinase (228 aa).

11-19 (GPASAGKST) contacts ATP.

It belongs to the cytidylate kinase family. Type 1 subfamily.

Its subcellular location is the cytoplasm. The catalysed reaction is CMP + ATP = CDP + ADP. It carries out the reaction dCMP + ATP = dCDP + ADP. This chain is Cytidylate kinase, found in Limosilactobacillus reuteri (strain DSM 20016) (Lactobacillus reuteri).